A 57-amino-acid polypeptide reads, in one-letter code: Large ribosomal subunit protein bL32 (57 aa).

Belongs to the bacterial ribosomal protein bL32 family.

This chain is Large ribosomal subunit protein bL32, found in Bacillus anthracis (strain A0248).